The primary structure comprises 254 residues: MSIITEIQGDLFDAPEGAALIHACNCQGSWGKGIAATFKEKYPAAYRIFRSHCQQYLSHPQTWTQTQTSRQQSRAFKLPEGTALIIPPQPADYQPQPQPQSQTAPLSNCGRGRGRGRGRAGGGALHNSRELTALSRPAGKKHWIICLFTSWHYGRWSRSPPDIILENTMSAMADLKRQIAAAAAASSTTSPATTTTTTTALAATGGCEEEQLGELWGCRLNAGLFEVPWERTKAVLEEAGLAVTIVQPPGSGYE.

Residues 1-254 (MSIITEIQGD…IVQPPGSGYE (254 aa)) enclose the Macro domain. Substrate-binding positions include 9-11 (GDL), 23-25 (ACN), and 30-35 (WGKGIA). The segment at 86–125 (IPPQPADYQPQPQPQSQTAPLSNCGRGRGRGRGRAGGGAL) is disordered. The segment covering 91 to 102 (ADYQPQPQPQSQ) has biased composition (low complexity). Substrate is bound at residue 220-226 (LNAGLFE).

This sequence belongs to the POA1 family.

It carries out the reaction ADP-alpha-D-ribose 1''-phosphate + H2O = ADP-D-ribose + phosphate. Its function is as follows. Highly specific phosphatase involved in the metabolism of ADP-ribose 1''-phosphate (Appr1p) which is produced as a consequence of tRNA splicing. The protein is ADP-ribose 1''-phosphate phosphatase (POA1) of Ajellomyces capsulatus (strain NAm1 / WU24) (Darling's disease fungus).